The following is a 770-amino-acid chain: Arf-GAP with coiled-coil, ANK repeat and PH domain-containing protein 2 (770 aa).

The BAR domain occupies 6-226 (DFEECLKDSP…MKDLGAQLDR (221 aa)). Residues 266–361 (GIVMEGYLFK…WIKAVQTSIA (96 aa)) form the PH domain. The disordered stretch occupies residues 371–392 (SEKLDKKSSPSTGSLDSGSESK). The segment covering 379–388 (SPSTGSLDSG) has biased composition (low complexity). A phosphoserine mark is found at serine 384 and serine 387. An Arf-GAP domain is found at 399–520 (ESALQRVQCI…KFVDKYSTLL (122 aa)). The C4-type zinc finger occupies 414–437 (CCDCGLADPRWASINLGITLCIEC). Serine 521 is modified (phosphoserine). The segment covering 548–561 (TPVKSNDSGIQQCS) has biased composition (polar residues). Residues 548 to 571 (TPVKSNDSGIQQCSDDGRESLPST) form a disordered region. A phosphoserine mark is found at serine 573 and serine 576. 3 ANK repeats span residues 632–661 (NQAT…NVNQ), 665–694 (QGRG…NQHA), and 698–727 (EGKD…NEEM). Tyrosine 734 is modified (phosphotyrosine). Serine 767 carries the phosphoserine modification.

As to quaternary structure, interacts with RAB35 (GTP-bound form); the interaction is direct and probably recruits ACAP2 to membranes. Interacts with MICALL1; the interaction is indirect through RAB35.

It localises to the endosome membrane. It is found in the cell membrane. GAP activity stimulated by phosphatidylinositol 4,5-bisphosphate (PIP2) and phosphatidic acid. In terms of biological role, GTPase-activating protein (GAP) for ADP ribosylation factor 6 (ARF6). Doesn't show GAP activity for RAB35. This chain is Arf-GAP with coiled-coil, ANK repeat and PH domain-containing protein 2 (Acap2), found in Rattus norvegicus (Rat).